Consider the following 794-residue polypeptide: Phenylalanine--tRNA ligase beta subunit (794 aa).

The 119-residue stretch at 40-158 (NSLNSELVLG…LKKYLGKDVK (119 aa)) folds into the tRNA-binding domain. The region spanning 402-477 (KNKTEFEIKI…RLYSYDNIQE (76 aa)) is the B5 domain. Mg(2+) contacts are provided by Asp-455, Asp-461, Glu-464, and Glu-465. The 93-residue stretch at 702–794 (SKFQSSSRDL…NVKKMKVVIR (93 aa)) folds into the FDX-ACB domain.

The protein belongs to the phenylalanyl-tRNA synthetase beta subunit family. Type 1 subfamily. As to quaternary structure, tetramer of two alpha and two beta subunits. Mg(2+) serves as cofactor.

It is found in the cytoplasm. It carries out the reaction tRNA(Phe) + L-phenylalanine + ATP = L-phenylalanyl-tRNA(Phe) + AMP + diphosphate + H(+). The sequence is that of Phenylalanine--tRNA ligase beta subunit from Mycoplasma capricolum subsp. capricolum (strain California kid / ATCC 27343 / NCTC 10154).